We begin with the raw amino-acid sequence, 168 residues long: Photosystem I assembly protein Ycf3 (168 aa).

3 TPR repeats span residues 35–68, 72–105, and 120–153; these read AFTY…EIDP, SYIL…NPFL, and GEQA…TPGN.

This sequence belongs to the Ycf3 family.

The protein localises to the plastid. The protein resides in the chloroplast thylakoid membrane. In terms of biological role, essential for the assembly of the photosystem I (PSI) complex. May act as a chaperone-like factor to guide the assembly of the PSI subunits. The sequence is that of Photosystem I assembly protein Ycf3 from Piper cenocladum (Ant piper).